We begin with the raw amino-acid sequence, 265 residues long: MNSPIDPAIVMPDVQSSTDTRHIPIQRVGIRGVRHPMLVLAGDGAAQPTVANWTLTVALPAEEKGTHMSRFVALLEKYRATPMTPALFAAMAREMLPLLHAERGDITASFPYFINKSAPVSGVQSLLDYEMQWIARAVGEQVEFELVAQVPVTSLCPCSKAISEYGAHNQRSHVTVSAIVDGDFRMDELIRLVEDEASCELWGLLKRPDEKYVTERAYDNPKFVEDLVRDVAARLKAHPGIGRFRVEAENFESIHNHSAYAVVEG.

The protein belongs to the GTP cyclohydrolase IV family.

It catalyses the reaction GTP + H2O = 7,8-dihydroneopterin 3'-triphosphate + formate + H(+). Its pathway is cofactor biosynthesis; 7,8-dihydroneopterin triphosphate biosynthesis; 7,8-dihydroneopterin triphosphate from GTP: step 1/1. In terms of biological role, converts GTP to 7,8-dihydroneopterin triphosphate. This Bordetella bronchiseptica (strain ATCC BAA-588 / NCTC 13252 / RB50) (Alcaligenes bronchisepticus) protein is GTP cyclohydrolase FolE2.